A 364-amino-acid chain; its full sequence is Ferrochelatase (364 aa).

His-210 and Glu-291 together coordinate Fe cation.

It belongs to the ferrochelatase family.

The protein localises to the cytoplasm. The catalysed reaction is heme b + 2 H(+) = protoporphyrin IX + Fe(2+). Its pathway is porphyrin-containing compound metabolism; protoheme biosynthesis; protoheme from protoporphyrin-IX: step 1/1. Functionally, catalyzes the ferrous insertion into protoporphyrin IX. This chain is Ferrochelatase, found in Idiomarina loihiensis (strain ATCC BAA-735 / DSM 15497 / L2-TR).